The sequence spans 101 residues: Small ribosomal subunit protein uS14A (101 aa).

The segment at Glu-29–Val-60 is disordered. A compositionally biased stretch (polar residues) spans Pro-34–Gln-45.

It belongs to the universal ribosomal protein uS14 family. Part of the 30S ribosomal subunit. Contacts proteins S3 and S10.

In terms of biological role, binds 16S rRNA, required for the assembly of 30S particles and may also be responsible for determining the conformation of the 16S rRNA at the A site. This is Small ribosomal subunit protein uS14A from Mycolicibacterium paratuberculosis (strain ATCC BAA-968 / K-10) (Mycobacterium paratuberculosis).